The chain runs to 164 residues: Protein DOWNSTREAM OF FLC (164 aa).

The first 23 residues, M1–A23, serve as a signal peptide directing secretion. Intrachain disulfides connect C36-C107, C39-C148, and C60-C95.

The protein belongs to the Ole e I family.

The protein localises to the secreted. Functionally, part of a three-gene cluster containing FLC, UFC and DFC, which is coordinately regulated in response to vernalization. Not regulated by FLX. The protein is Protein DOWNSTREAM OF FLC (DFC) of Arabidopsis thaliana (Mouse-ear cress).